A 548-amino-acid chain; its full sequence is MTSVTDRSAHSAERSTEHTIDIHTTAGKLAELHKRREESLHPVGEDAVEKVHAKGKLTARERIYALLDEDSFVELDALAKHRSTNFNLGEKRPLGDGVVTGYGTIDGRDVCIFSQDATVFGGSLGEVYGEKIVKVQELAIKTGRPLIGINDGAGARIQEGVVSLGLYSRIFRNNILASGVIPQISLIMGAAAGGHVYSPALTDFVIMVDQTSQMFITGPDVIKTVTGEEVTMEELGGAHTHMAKSGTAHYAASGEQDAFDYVRELLSYLPPNNSTDAPRYQAAAPTGPIEENLTDEDLELDTLIPDSPNQPYDMHEVITRLLDDEFLEIQAGYAQNIVVGFGRIDGRPVGIVANQPTHFAGCLDINASEKAARFVRTCDCFNIPIVMLVDVPGFLPGTDQEYNGIIRRGAKLLYAYGEATVPKITVITRKAYGGAYCVMGSKDMGCDVNLAWPTAQIAVMGASGAVGFVYRQQLAEAAANGEDIDKLRLRLQQEYEDTLVNPYVAAERGYVDAVIPPSHTRGYIGTALRLLERKIAQLPPKKHGNVPL.

A disordered region spans residues 1 to 23 (MTSVTDRSAHSAERSTEHTIDIH). Positions 7 to 21 (RSAHSAERSTEHTID) are enriched in basic and acidic residues. In terms of domain architecture, CoA carboxyltransferase N-terminal spans 25–281 (TAGKLAELHK…NNSTDAPRYQ (257 aa)). The region spanning 295–541 (DEDLELDTLI…ERKIAQLPPK (247 aa)) is the CoA carboxyltransferase C-terminal domain.

The protein belongs to the AccD/PCCB family. In terms of assembly, forms homohexamers. The biotin-dependent acyl-CoA carboxylase complex is composed of AccA3, which contains the biotin carboxylase (BC) and biotin carboxyl carrier protein (BCCP) domains, and AccD5, which contains the carboxyl transferase (CT) domain. The AccA3/AccD5 complex forms a dodecamer, and can associate with the epsilon subunit AccE5 (Rv3280), which stimulates carboxylation by the complex. Is also part of the long-chain acyl-CoA carboxylase (LCC) complex, which is composed of AccA3, AccD4, AccD5 and AccE5. The four subunits are essential for activity, but AccD5, together with AccE5, probably plays a structural role rather than a catalytic one.

It catalyses the reaction N(6)-carboxybiotinyl-L-lysyl-[protein] + acetyl-CoA = N(6)-biotinyl-L-lysyl-[protein] + malonyl-CoA. The enzyme catalyses N(6)-carboxybiotinyl-L-lysyl-[protein] + propanoyl-CoA = methylmalonyl-CoA + N(6)-biotinyl-L-lysyl-[protein]. It functions in the pathway lipid metabolism; mycolic acid biosynthesis. Carboxylase activity of the AccA3/AccD5 complex is stimulated by interaction with AccE5. Component of a biotin-dependent acyl-CoA carboxylase complex. This subunit transfers the CO2 from carboxybiotin to the CoA ester substrate. When associated with the alpha3 subunit AccA3, is involved in the carboxylation of acetyl-CoA and propionyl-CoA, with a preference for propionyl-CoA. Is also required for the activity of the long-chain acyl-CoA carboxylase (LCC) complex. The protein is Biotin-dependent acetyl-/propionyl-coenzyme A carboxylase beta5 subunit of Mycobacterium tuberculosis (strain ATCC 25618 / H37Rv).